We begin with the raw amino-acid sequence, 341 residues long: Methionine import ATP-binding protein MetN 3 (341 aa).

Residues 2 to 241 form the ABC transporter domain; sequence ILLENVKKIY…PQQDITKRFV (240 aa). 38-45 is an ATP binding site; that stretch reads GYSGAGKS.

It belongs to the ABC transporter superfamily. Methionine importer (TC 3.A.1.24) family. In terms of assembly, the complex is composed of two ATP-binding proteins (MetN), two transmembrane proteins (MetI) and a solute-binding protein (MetQ).

It is found in the cell membrane. It catalyses the reaction L-methionine(out) + ATP + H2O = L-methionine(in) + ADP + phosphate + H(+). The enzyme catalyses D-methionine(out) + ATP + H2O = D-methionine(in) + ADP + phosphate + H(+). Part of the ABC transporter complex MetNIQ involved in methionine import. Responsible for energy coupling to the transport system. In Bacillus cereus (strain ATCC 10987 / NRS 248), this protein is Methionine import ATP-binding protein MetN 3.